The primary structure comprises 115 residues: Large ribosomal subunit protein bL20 (115 aa).

It belongs to the bacterial ribosomal protein bL20 family.

Binds directly to 23S ribosomal RNA and is necessary for the in vitro assembly process of the 50S ribosomal subunit. It is not involved in the protein synthesizing functions of that subunit. The polypeptide is Large ribosomal subunit protein bL20 (Salinibacter ruber (strain DSM 13855 / M31)).